The primary structure comprises 376 residues: Lipid-A-disaccharide synthase (376 aa).

Belongs to the LpxB family.

It carries out the reaction a lipid X + a UDP-2-N,3-O-bis[(3R)-3-hydroxyacyl]-alpha-D-glucosamine = a lipid A disaccharide + UDP + H(+). It functions in the pathway bacterial outer membrane biogenesis; LPS lipid A biosynthesis. Its function is as follows. Condensation of UDP-2,3-diacylglucosamine and 2,3-diacylglucosamine-1-phosphate to form lipid A disaccharide, a precursor of lipid A, a phosphorylated glycolipid that anchors the lipopolysaccharide to the outer membrane of the cell. The sequence is that of Lipid-A-disaccharide synthase from Coxiella burnetii (strain CbuK_Q154) (Coxiella burnetii (strain Q154)).